The following is a 216-amino-acid chain: GTP-binding nuclear protein spi1 (216 aa).

Residues 6–170 (NVPTFKLVLV…LWLARKLVGN (165 aa)) enclose the Small GTPase Ran-type domain. 17–24 (DGGTGKTT) contacts GTP. T20 is subject to Phosphothreonine. The segment at 36–44 (KKYIATLGV) is switch-I. Residues G67, 121–124 (NKVD), and 149–151 (SAK) each bind GTP. The tract at residues 67-83 (GQEKLGGLRDGYYIQGQ) is switch-II.

This sequence belongs to the small GTPase superfamily. Ran family. Oligomer of dis3, pim1 and spi1. Found in a nuclear export complex with RanGTP, exportin and pre-miRNA. Interacts with fft3.

The protein resides in the nucleus. Its function is as follows. GTP-binding protein involved in nucleocytoplasmic transport. Required for the import of protein into the nucleus and also for RNA export. This Schizosaccharomyces pombe (strain 972 / ATCC 24843) (Fission yeast) protein is GTP-binding nuclear protein spi1 (spi1).